The chain runs to 242 residues: Phosphoribosylaminoimidazole-succinocarboxamide synthase (242 aa).

This sequence belongs to the SAICAR synthetase family.

The enzyme catalyses 5-amino-1-(5-phospho-D-ribosyl)imidazole-4-carboxylate + L-aspartate + ATP = (2S)-2-[5-amino-1-(5-phospho-beta-D-ribosyl)imidazole-4-carboxamido]succinate + ADP + phosphate + 2 H(+). It participates in purine metabolism; IMP biosynthesis via de novo pathway; 5-amino-1-(5-phospho-D-ribosyl)imidazole-4-carboxamide from 5-amino-1-(5-phospho-D-ribosyl)imidazole-4-carboxylate: step 1/2. This Prochlorococcus marinus (strain MIT 9303) protein is Phosphoribosylaminoimidazole-succinocarboxamide synthase.